We begin with the raw amino-acid sequence, 348 residues long: Sulfate/thiosulfate import ATP-binding protein CysA (348 aa).

In terms of domain architecture, ABC transporter spans 3 to 237 (IEVRNIVKEF…PASAFVHGFI (235 aa)). An ATP-binding site is contributed by 35–42 (GPSGSGKT).

This sequence belongs to the ABC transporter superfamily. Sulfate/tungstate importer (TC 3.A.1.6) family. In terms of assembly, the complex is composed of two ATP-binding proteins (CysA), two transmembrane proteins (CysT and CysW) and a solute-binding protein (CysP).

Its subcellular location is the cell inner membrane. It carries out the reaction sulfate(out) + ATP + H2O = sulfate(in) + ADP + phosphate + H(+). The catalysed reaction is thiosulfate(out) + ATP + H2O = thiosulfate(in) + ADP + phosphate + H(+). In terms of biological role, part of the ABC transporter complex CysAWTP involved in sulfate/thiosulfate import. Responsible for energy coupling to the transport system. The chain is Sulfate/thiosulfate import ATP-binding protein CysA from Rhodopseudomonas palustris (strain ATCC BAA-98 / CGA009).